The sequence spans 238 residues: Ribonuclease PH (238 aa).

Phosphate is bound by residues R86 and 124-126 (GTR).

This sequence belongs to the RNase PH family. In terms of assembly, homohexameric ring arranged as a trimer of dimers.

It carries out the reaction tRNA(n+1) + phosphate = tRNA(n) + a ribonucleoside 5'-diphosphate. Functionally, phosphorolytic 3'-5' exoribonuclease that plays an important role in tRNA 3'-end maturation. Removes nucleotide residues following the 3'-CCA terminus of tRNAs; can also add nucleotides to the ends of RNA molecules by using nucleoside diphosphates as substrates, but this may not be physiologically important. Probably plays a role in initiation of 16S rRNA degradation (leading to ribosome degradation) during starvation. This Enterobacter sp. (strain 638) protein is Ribonuclease PH.